A 1308-amino-acid polypeptide reads, in one-letter code: Cadherin-related family member 2 (1308 aa).

The first 20 residues, 1 to 20 (MAWLWLLCALLPAFMVSVTA), serve as a signal peptide directing secretion. The Extracellular segment spans residues 21 to 1152 (NSPPSFGVNM…EPDQQKLLTS (1132 aa)). Cadherin domains follow at residues 33-124 (VTLP…IPVF), 125-241 (LNTE…DPRF), 242-353 (IREF…KPEF), 368-480 (AQVN…RPVF), 481-586 (SQSL…PPVV), 586-695 (VRGS…LPVF), 695-807 (FNQS…PPTL), 809-927 (AASL…APYF), and 929-1051 (PNNQ…RLQF). The helical transmembrane segment at 1153–1173 (VIIGLVVSLVLVLVILITALV) threads the bilayer. Topologically, residues 1174–1308 (CLRKSYHRKL…TNPGLDTTDL (135 aa)) are cytoplasmic. The tract at residues 1178 to 1308 (SYHRKLRAMK…TNPGLDTTDL (131 aa)) is mediates interaction with USH1C and MYO7B and is required for proper localization to microvilli tips and function in microvilli organization. Serine 1245 carries the post-translational modification Phosphoserine. The tract at residues 1251–1308 (VDLDMDSKEFKRKDLPGDPPEPDPEPLTAVLSGRSAGASEQQKKNLSFTNPGLDTTDL) is disordered. The segment covering 1255-1266 (MDSKEFKRKDLP) has biased composition (basic and acidic residues). Over residues 1288–1308 (ASEQQKKNLSFTNPGLDTTDL) the composition is skewed to polar residues. Serine 1297 is subject to Phosphoserine.

In terms of assembly, part of the IMAC/intermicrovillar adhesion complex/intermicrovillar tip-link complex composed of ANKS4B, MYO7B, USH1C, CDHR2 and CDHR5. Interacts with MAST2. Interacts (via cytoplasmic domain) with USH1C and MYO7B; required for proper localization of CDHR2 to microvilli tips and its function in brush border differentiation.

It is found in the apical cell membrane. Its subcellular location is the cell projection. The protein localises to the microvillus membrane. It localises to the cell junction. Its function is as follows. Intermicrovillar adhesion molecule that forms, via its extracellular domain, calcium-dependent heterophilic complexes with CDHR5 on adjacent microvilli. Thereby, controls the packing of microvilli at the apical membrane of epithelial cells. Through its cytoplasmic domain, interacts with microvillus cytoplasmic proteins to form the intermicrovillar adhesion complex/IMAC. This complex plays a central role in microvilli and epithelial brush border differentiation. May also play a role in cell-cell adhesion and contact inhibition in epithelial cells. This Mus musculus (Mouse) protein is Cadherin-related family member 2.